The sequence spans 677 residues: Methionine--tRNA ligase (677 aa).

Residues 15–25 carry the 'HIGH' region motif; that stretch reads PYANGSIHLGH. C146, C149, C159, and C162 together coordinate Zn(2+). A 'KMSKS' region motif is present at residues 333–337; the sequence is KMSKS. K336 is an ATP binding site. The 103-residue stretch at 575–677 folds into the tRNA-binding domain; the sequence is DFAKIDLRVA…DGAKPGQQVK (103 aa).

It belongs to the class-I aminoacyl-tRNA synthetase family. MetG type 1 subfamily. In terms of assembly, homodimer. Zn(2+) serves as cofactor.

Its subcellular location is the cytoplasm. It carries out the reaction tRNA(Met) + L-methionine + ATP = L-methionyl-tRNA(Met) + AMP + diphosphate. Its function is as follows. Is required not only for elongation of protein synthesis but also for the initiation of all mRNA translation through initiator tRNA(fMet) aminoacylation. This Salmonella typhi protein is Methionine--tRNA ligase.